The following is a 103-amino-acid chain: Large ribosomal subunit protein bL21 (103 aa).

It belongs to the bacterial ribosomal protein bL21 family. In terms of assembly, part of the 50S ribosomal subunit. Contacts protein L20.

This protein binds to 23S rRNA in the presence of protein L20. This Pseudomonas fluorescens (strain Pf0-1) protein is Large ribosomal subunit protein bL21.